Reading from the N-terminus, the 318-residue chain is NADH-ubiquinone oxidoreductase chain 1 (318 aa).

8 consecutive transmembrane segments (helical) span residues 2-22, 68-88, 100-120, 146-166, 171-191, 213-233, 253-273, and 285-305; these read PMTNLLLLIVPILIAMAFLML, ITLYITAPTLALTIALLLWTP, LGLLFILATSSLAVYSILWSG, LAIILLSTLLMSGSFNLSTLV, HLWLILPTWPLAMMWFISTLA, IEYAAGPFALFFMAEYMNIIM, ELYTTYFVTKALLLTSLFLWI, and LMHLLWKNFLPLTLASLMWYI.

Belongs to the complex I subunit 1 family. As to quaternary structure, core subunit of respiratory chain NADH dehydrogenase (Complex I) which is composed of 45 different subunits.

Its subcellular location is the mitochondrion inner membrane. The enzyme catalyses a ubiquinone + NADH + 5 H(+)(in) = a ubiquinol + NAD(+) + 4 H(+)(out). Its function is as follows. Core subunit of the mitochondrial membrane respiratory chain NADH dehydrogenase (Complex I) which catalyzes electron transfer from NADH through the respiratory chain, using ubiquinone as an electron acceptor. Essential for the catalytic activity and assembly of complex I. This Pan troglodytes (Chimpanzee) protein is NADH-ubiquinone oxidoreductase chain 1 (MT-ND1).